A 623-amino-acid chain; its full sequence is Bifunctional methionine biosynthesis protein MetXA/MetW (623 aa).

Polar residues predominate over residues 1–17; that stretch reads MTSGRSTRVTMFESQAS. The disordered stretch occupies residues 1 to 30; the sequence is MTSGRSTRVTMFESQASMGEPSNEDLSSTD. Positions 77 to 385 constitute an AB hydrolase-1 domain; it reads NAVLVCHAVS…TTNAGHDAFL (309 aa). Catalysis depends on serine 183, which acts as the Nucleophile. Arginine 253 is a substrate binding site. Active-site residues include aspartate 348 and histidine 381. Aspartate 382 provides a ligand contact to substrate. Residues 417 to 619 are metW; sequence NVDEESILEI…NADTAVIAFH (203 aa).

In the N-terminal section; belongs to the AB hydrolase superfamily. MetX family. This sequence in the C-terminal section; belongs to the MetW family. In terms of assembly, homodimer.

Its subcellular location is the cytoplasm. The catalysed reaction is L-homoserine + acetyl-CoA = O-acetyl-L-homoserine + CoA. The protein operates within amino-acid biosynthesis; L-methionine biosynthesis via de novo pathway; O-acetyl-L-homoserine from L-homoserine: step 1/1. In terms of biological role, transfers an acetyl group from acetyl-CoA to L-homoserine, forming acetyl-L-homoserine. The polypeptide is Bifunctional methionine biosynthesis protein MetXA/MetW (Rhodopirellula baltica (strain DSM 10527 / NCIMB 13988 / SH1)).